A 262-amino-acid chain; its full sequence is Origin recognition complex subunit 6 (262 aa).

A disordered region spans residues 197–217 (ALKRKKPEFSPTLKKKEPGLE). A Glycyl lysine isopeptide (Lys-Gly) (interchain with G-Cter in SUMO2) cross-link involves residue Lys221. Position 239 is a phosphothreonine (Thr239).

Belongs to the ORC6 family. As to quaternary structure, component of ORC, a complex composed of at least 6 subunits: ORC1, ORC2, ORC3, ORC4, ORC5 and ORC6. ORC is regulated in a cell-cycle dependent manner. It is sequentially assembled at the exit from anaphase of mitosis and disassembled as cells enter S phase. Interacts with DBF4.

It localises to the nucleus. Functionally, component of the origin recognition complex (ORC) that binds origins of replication. DNA-binding is ATP-dependent. The specific DNA sequences that define origins of replication have not been identified yet. ORC is required to assemble the pre-replication complex necessary to initiate DNA replication. The sequence is that of Origin recognition complex subunit 6 (Orc6) from Mus musculus (Mouse).